Reading from the N-terminus, the 264-residue chain is Ribosomal RNA small subunit methyltransferase J (264 aa).

S-adenosyl-L-methionine contacts are provided by residues 111–112, 127–128, and D180; these read RD and ER.

Belongs to the methyltransferase superfamily. RsmJ family.

It is found in the cytoplasm. It catalyses the reaction guanosine(1516) in 16S rRNA + S-adenosyl-L-methionine = N(2)-methylguanosine(1516) in 16S rRNA + S-adenosyl-L-homocysteine + H(+). In terms of biological role, specifically methylates the guanosine in position 1516 of 16S rRNA. This chain is Ribosomal RNA small subunit methyltransferase J, found in Alkalilimnicola ehrlichii (strain ATCC BAA-1101 / DSM 17681 / MLHE-1).